The primary structure comprises 398 residues: MSDTLLNPYFGEFGGMYVPEILVPVLKQLEQAFVEAQNDPTFQAEFADLLKNYAGRPTALTLCRNLTKGTKTKLYLKREDLLHGGAHKTNQVLGQILLAKRMGKTRIIAETGAGQHGVATALACAMLDMPCRVYMGAKDVERQSPNVFRMRLMGAEVIPVQKGSCSLKDACCEAMRDWSANYETTHYLLGTAAGPHPFPTIVREFQKMIGEETKRQILEREGRLPDAVIAAVGGGSNAIGMFADFIDESNVRLIGVEPAGKGIETGEHGAPLKHGTTGIYFGMKSPIMQDKDGQIEESYSISAGLDFPSVGPQHAYLNEIGRAEYVSITDEEALNAFQELAKHEGIIPALESSHALAYALKLIKQNPEKEQLLVVNLSGRGDKDIFTVDKILTEKGMK.

Position 88 is an N6-(pyridoxal phosphate)lysine (lysine 88).

It belongs to the TrpB family. As to quaternary structure, tetramer of two alpha and two beta chains. Pyridoxal 5'-phosphate is required as a cofactor.

It carries out the reaction (1S,2R)-1-C-(indol-3-yl)glycerol 3-phosphate + L-serine = D-glyceraldehyde 3-phosphate + L-tryptophan + H2O. Its pathway is amino-acid biosynthesis; L-tryptophan biosynthesis; L-tryptophan from chorismate: step 5/5. The beta subunit is responsible for the synthesis of L-tryptophan from indole and L-serine. This is Tryptophan synthase beta chain from Haemophilus influenzae (strain PittGG).